We begin with the raw amino-acid sequence, 49 residues long: Disintegrin eristostatin (49 aa).

The region spanning 1–49 is the Disintegrin domain; sequence QEEPCATGPCCRRCKFKRAGKVCRVARGDWNDDYCTGKSCDCPKNPWNG. 4 disulfide bridges follow: C5-C14, C10-C35, C11-C40, and C23-C42. The Cell attachment site signature appears at 27–29; that stretch reads RGD.

This sequence belongs to the venom metalloproteinase (M12B) family. P-II subfamily. P-IIa sub-subfamily. Monomer. As to expression, expressed by the venom gland.

Its subcellular location is the secreted. Is a potent inhibitor of ADP-induced platelet aggregation. Acts by binding to alpha-IIb/beta-3 (ITGA2B/ITGB3) receptor on the platelet surface. Binds with the same high affinity to resting and activated platelets. Also binds the alpha-4/beta-1 (ITGA4/ITGB1) integrin. Is a potent inhibitor of human and murine melanoma metastases in mouse model systems, also due to the inhibition of binding between the alpha-4/beta-1 integrin and the vascular cell adhesion protein VCAM1. Reacts neither with the integrin alpha-V/beta-3 (ITGAV/ITGB3) vitronectin receptor nor with the integrin alpha-5/beta-1 (ITGA5/ITGB1) fibronectin receptor. Has no effect on cell proliferation or angiogenesis. Specifically inhibits cell migration on fibronectin, but not that on collagen IV or laminin. May involve fibronectin-binding integrins that mediate cell migration. This chain is Disintegrin eristostatin, found in Eristicophis macmahoni (Leaf-nosed viper).